The primary structure comprises 137 residues: 3-hydroxyacyl-[acyl-carrier-protein] dehydratase FabZ (137 aa).

His46 is an active-site residue.

Belongs to the thioester dehydratase family. FabZ subfamily.

The protein resides in the cytoplasm. It carries out the reaction a (3R)-hydroxyacyl-[ACP] = a (2E)-enoyl-[ACP] + H2O. In terms of biological role, involved in unsaturated fatty acids biosynthesis. Catalyzes the dehydration of short chain beta-hydroxyacyl-ACPs and long chain saturated and unsaturated beta-hydroxyacyl-ACPs. In Thermotoga neapolitana (strain ATCC 49049 / DSM 4359 / NBRC 107923 / NS-E), this protein is 3-hydroxyacyl-[acyl-carrier-protein] dehydratase FabZ.